Reading from the N-terminus, the 97-residue chain is Alpha-latrotoxin associated low molecular weight protein 2 (97 aa).

The signal sequence occupies residues 1–19; sequence MFKLICIVFIATILSITSA. 3 disulfide bridges follow: C36–C72, C52–C68, and C55–C81.

Belongs to the arthropod CHH/MIH/GIH/VIH hormone family. In terms of tissue distribution, expressed by the venom gland.

The protein resides in the secreted. Its function is as follows. May increase the toxicity of alpha-latrotoxin and/or other venom components. Is non-toxic to mice and to the cockroach Periplaneta americana. The protein is Alpha-latrotoxin associated low molecular weight protein 2 of Steatoda grossa (False black widow).